The following is a 180-amino-acid chain: ATP-dependent protease subunit HslV (180 aa).

Thr9 is an active-site residue. Na(+) contacts are provided by Ala164, Cys167, and Thr170.

It belongs to the peptidase T1B family. HslV subfamily. A double ring-shaped homohexamer of HslV is capped on each side by a ring-shaped HslU homohexamer. The assembly of the HslU/HslV complex is dependent on binding of ATP.

Its subcellular location is the cytoplasm. The catalysed reaction is ATP-dependent cleavage of peptide bonds with broad specificity.. Its activity is regulated as follows. Allosterically activated by HslU binding. In terms of biological role, protease subunit of a proteasome-like degradation complex believed to be a general protein degrading machinery. This Leptospira borgpetersenii serovar Hardjo-bovis (strain JB197) protein is ATP-dependent protease subunit HslV.